Consider the following 323-residue polypeptide: Chitinase 1 (323 aa).

Positions 1–20 are cleaved as a signal peptide; sequence MRALAVVVVATAFAVVAVRG. The region spanning 21–61 is the Chitin-binding type-1 domain; the sequence is EQCGSQAGGALCPNCLCCSQYGWCGSTSAYCGSGCQSQCSG. Disulfide bonds link cysteine 23–cysteine 38, cysteine 32–cysteine 44, cysteine 35–cysteine 63, cysteine 37–cysteine 51, cysteine 55–cysteine 59, cysteine 100–cysteine 162, cysteine 176–cysteine 184, and cysteine 283–cysteine 315. The Proton donor role is filled by glutamate 144.

It belongs to the glycosyl hydrolase 19 family. Chitinase class I subfamily. As to expression, expressed in roots, leaves, sheaths and meristems.

It catalyses the reaction Random endo-hydrolysis of N-acetyl-beta-D-glucosaminide (1-&gt;4)-beta-linkages in chitin and chitodextrins.. Hydrolyzes chitin and may play a role in defense against fungal pathogens containing chitin. The chain is Chitinase 1 (Cht1) from Oryza sativa subsp. japonica (Rice).